Consider the following 150-residue polypeptide: Histone H3-like centromeric protein A (150 aa).

Residues 1-55 are disordered; that stretch reads MRPGSTPPSRRKSRPPRRVSPPLPTTSRTSPRRPHAQQQRRASRASPKKRFRPGT. Residues 41-53 show a composition bias toward basic residues; that stretch reads RASRASPKKRFRP. An H3-like region spans residues 53-150; it reads PGTRALMEIR…RIRGVNEGLG (98 aa).

The protein belongs to the histone H3 family. Component of centromeric nucleosomes, where DNA is wrapped around a histone octamer core. The octamer contains two molecules each of H2A, H2B, CENPA and H4 assembled in one CENPA-H4 heterotetramer and two H2A-H2B heterodimers. CENPA modulates the DNA-binding characteristics of nucleosomes so that protruding DNA ends have higher flexibility than in nucleosomes containing conventional histone H3.

The protein resides in the nucleus. Its subcellular location is the chromosome. The protein localises to the centromere. Functionally, histone H3-like nucleosomal protein that is specifically found in centromeric nucleosomes. Replaces conventional H3 in the nucleosome core of centromeric chromatin that serves as an assembly site for the inner kinetochore. The presence of CENPA subtly modifies the nucleosome structure and the way DNA is wrapped around the nucleosome and gives rise to protruding DNA ends that are less well-ordered and rigid compared to nucleosomes containing histone H3. May serve as an epigenetic mark that propagates centromere identity through replication and cell division. Required for recruitment and assembly of kinetochore proteins, and as a consequence required for progress through mitosis, chromosome segregation and cytokinesis. The chain is Histone H3-like centromeric protein A (cenpa) from Xenopus laevis (African clawed frog).